A 230-amino-acid chain; its full sequence is Protein-L-isoaspartate O-methyltransferase (230 aa).

The active site involves S65.

This sequence belongs to the methyltransferase superfamily. L-isoaspartyl/D-aspartyl protein methyltransferase family. In terms of assembly, monomer. Highest contents in seeds.

The protein resides in the cytoplasm. It catalyses the reaction [protein]-L-isoaspartate + S-adenosyl-L-methionine = [protein]-L-isoaspartate alpha-methyl ester + S-adenosyl-L-homocysteine. Functionally, catalyzes the methyl esterification of L-isoaspartyl residues in peptides and proteins that result from spontaneous decomposition of normal L-aspartyl and L-asparaginyl residues. It plays a role in the repair and/or degradation of damaged proteins. This enzyme does not act on D-aspartyl residues. In Triticum aestivum (Wheat), this protein is Protein-L-isoaspartate O-methyltransferase (PCM).